The following is a 342-amino-acid chain: MREMITIKPGKITVQANPNMPEEVANLFRKQHYEIVGRHSGVKLCHWLKKSLTEGRFCYKQKFYGIHSHRCLQMTPVLAWCTHNCIFCWRPMETFLGTELPQPWDDPEFIVEESIKAQRKLLIGYKGNPKVDKKKFEEAWEPKHAAISLSGEPMLYPYMGDLVEEFHKRGFTTFIVTNGTVPERLEEMIKEDKLPTQLYVSITAPDIETYNSVNIPMIPDGWERIMRFLELMRDLPTRTVVRLTLVKGENMHSPEKYAKLILKARPMFVEAKAYMFVGYSRNRLTINNMPSHQDIREFAEALVKHLPGYHIEDEYEPSRVVLIMRDDVDPQGTGVNGRFIKH.

The [4Fe-4S] cluster site is built by cysteine 45, cysteine 58, cysteine 71, cysteine 81, cysteine 85, and cysteine 88. One can recognise a Radical SAM core domain in the interval 64–312 (YGIHSHRCLQ…VKHLPGYHIE (249 aa)).

Belongs to the TYW1 family. As to quaternary structure, monomer. Requires [4Fe-4S] cluster as cofactor.

The protein localises to the cytoplasm. It catalyses the reaction N(1)-methylguanosine(37) in tRNA(Phe) + pyruvate + S-adenosyl-L-methionine = 4-demethylwyosine(37) in tRNA(Phe) + 5'-deoxyadenosine + L-methionine + CO2 + H2O. Functionally, component of the wyosine derivatives biosynthesis pathway that catalyzes the condensation of N-methylguanine with 2 carbon atoms from pyruvate to form the tricyclic 4-demethylwyosine (imG-14) on guanosine-37 of tRNA(Phe). In Pyrococcus abyssi (strain GE5 / Orsay), this protein is S-adenosyl-L-methionine-dependent tRNA 4-demethylwyosine synthase.